Consider the following 517-residue polypeptide: Maturase K (517 aa).

The protein belongs to the intron maturase 2 family. MatK subfamily.

It localises to the plastid. It is found in the chloroplast. Its function is as follows. Usually encoded in the trnK tRNA gene intron. Probably assists in splicing its own and other chloroplast group II introns. The chain is Maturase K from Acer pseudoplatanus (Sycamore maple).